A 265-amino-acid chain; its full sequence is 4-hydroxy-tetrahydrodipicolinate reductase (265 aa).

NAD(+) contacts are provided by residues Gly7–Met12 and Asp33. NADP(+) is bound at residue Arg34. NAD(+) contacts are provided by residues Gly96–Thr98 and Ala120–Met123. His153 serves as the catalytic Proton donor/acceptor. Residue His154 participates in (S)-2,3,4,5-tetrahydrodipicolinate binding. Residue Lys157 is the Proton donor of the active site. Gly163–Thr164 is a (S)-2,3,4,5-tetrahydrodipicolinate binding site.

It belongs to the DapB family.

The protein resides in the cytoplasm. It catalyses the reaction (S)-2,3,4,5-tetrahydrodipicolinate + NAD(+) + H2O = (2S,4S)-4-hydroxy-2,3,4,5-tetrahydrodipicolinate + NADH + H(+). It carries out the reaction (S)-2,3,4,5-tetrahydrodipicolinate + NADP(+) + H2O = (2S,4S)-4-hydroxy-2,3,4,5-tetrahydrodipicolinate + NADPH + H(+). Its pathway is amino-acid biosynthesis; L-lysine biosynthesis via DAP pathway; (S)-tetrahydrodipicolinate from L-aspartate: step 4/4. Its function is as follows. Catalyzes the conversion of 4-hydroxy-tetrahydrodipicolinate (HTPA) to tetrahydrodipicolinate. In Burkholderia orbicola (strain MC0-3), this protein is 4-hydroxy-tetrahydrodipicolinate reductase.